Consider the following 298-residue polypeptide: MSNAREIRSKVQSVKNTQKITGAMELVAASKMRGAIVKMNNVRPYVESANTIIKNVTAASIDYPNPYLFDRDVKRVGYIVTSTDRGLCGGLNINLFKHVLKEIKNNIEDRVGVDVCVIGSKAENFFAKLKDVNIVATAHYNDKDKEGSIRAIGGAVKVMLDKFTAGEIDRLYMSSNQFVSTIKQRPRLQTLLPIQDIFSAEEIKANKEKATKGHWDYIYERDIEEVLNALCIRYIEAQVRGAILENAACEQAARMMAMKNATDNASDIIDQLKLDYNKVRQAMITQELAEICSGAAAV.

The protein belongs to the ATPase gamma chain family. In terms of assembly, F-type ATPases have 2 components, CF(1) - the catalytic core - and CF(0) - the membrane proton channel. CF(1) has five subunits: alpha(3), beta(3), gamma(1), delta(1), epsilon(1). CF(0) has three main subunits: a, b and c.

The protein localises to the cell inner membrane. In terms of biological role, produces ATP from ADP in the presence of a proton gradient across the membrane. The gamma chain is believed to be important in regulating ATPase activity and the flow of protons through the CF(0) complex. The polypeptide is ATP synthase gamma chain (Francisella tularensis subsp. holarctica (strain FTNF002-00 / FTA)).